We begin with the raw amino-acid sequence, 278 residues long: Nucleotide-binding protein Tmel_1373 (278 aa).

10-17 (GLSGAGKS) is an ATP binding site. 58 to 61 (DSRS) serves as a coordination point for GTP.

The protein belongs to the RapZ-like family.

Functionally, displays ATPase and GTPase activities. The polypeptide is Nucleotide-binding protein Tmel_1373 (Thermosipho melanesiensis (strain DSM 12029 / CIP 104789 / BI429)).